A 151-amino-acid polypeptide reads, in one-letter code: MRCPHCGNCDDKVMESRTLAQGDCIRRRRECLACGYRFTSYEHIEEKPFMVIKKDGRREPFDRKKLEKGIERALEKRPVSLNSIENIVTEIEDQAVLNSGLNKEIETTVLGEMVLSHLYSIDKVAYIRFASVYKQFSNLDEFVNEVKKVRK.

Residues 3–34 (CPHCGNCDDKVMESRTLAQGDCIRRRRECLAC) fold into a zinc finger. Residues 49-141 (FMVIKKDGRR…VYKQFSNLDE (93 aa)) enclose the ATP-cone domain.

The protein belongs to the NrdR family. Requires Zn(2+) as cofactor.

Functionally, negatively regulates transcription of bacterial ribonucleotide reductase nrd genes and operons by binding to NrdR-boxes. The sequence is that of Transcriptional repressor NrdR from Treponema denticola (strain ATCC 35405 / DSM 14222 / CIP 103919 / JCM 8153 / KCTC 15104).